The following is a 562-amino-acid chain: DNA-binding protein MutS2 (562 aa).

Residue 380-387 participates in ATP binding; the sequence is GANSGGKT.

Belongs to the DNA mismatch repair MutS family. Archaeal Muts2 subfamily. Multimer. Co(2+) serves as cofactor. The cofactor is Mn(2+).

Functionally, has ATPase and non-specific DNA-binding activities. May be involved in recombination and/or recombinational repair. Not involved in mismatch repair. This chain is DNA-binding protein MutS2, found in Pyrococcus furiosus (strain ATCC 43587 / DSM 3638 / JCM 8422 / Vc1).